Reading from the N-terminus, the 124-residue chain is Ribonuclease pancreatic (124 aa).

The tract at residues 1–24 is disordered; it reads KETAAAKFQRQHMDSSTSSASSSN. Residues Lys7 and Arg10 each coordinate substrate. Residue His12 is the Proton acceptor of the active site. 4 disulfide bridges follow: Cys26–Cys84, Cys40–Cys95, Cys58–Cys110, and Cys65–Cys72. An N-linked (GlcNAc...) asparagine; in river-breed only glycan is attached at Asn34. Substrate-binding positions include 41 to 45, Lys66, and Arg85; that span reads KPVNT. Catalysis depends on His119, which acts as the Proton donor.

This sequence belongs to the pancreatic ribonuclease family. Monomer. Interacts with and forms tight 1:1 complexes with RNH1. Dimerization of two such complexes may occur. Interaction with RNH1 inhibits this protein. Post-translationally, swamp breed ribonuclease do not bind carbohydrate, but there is evidence of a polymorphic form that does. As to expression, pancreas.

It localises to the secreted. The catalysed reaction is an [RNA] containing cytidine + H2O = an [RNA]-3'-cytidine-3'-phosphate + a 5'-hydroxy-ribonucleotide-3'-[RNA].. The enzyme catalyses an [RNA] containing uridine + H2O = an [RNA]-3'-uridine-3'-phosphate + a 5'-hydroxy-ribonucleotide-3'-[RNA].. Its function is as follows. Endonuclease that catalyzes the cleavage of RNA on the 3' side of pyrimidine nucleotides. Acts on single-stranded and double-stranded RNA. The chain is Ribonuclease pancreatic (RNASE1) from Bubalus bubalis (Domestic water buffalo).